Reading from the N-terminus, the 526-residue chain is Phosphoenolpyruvate carboxylase (526 aa).

It belongs to the PEPCase type 2 family. In terms of assembly, homotetramer. The cofactor is Mg(2+).

It catalyses the reaction oxaloacetate + phosphate = phosphoenolpyruvate + hydrogencarbonate. In terms of biological role, catalyzes the irreversible beta-carboxylation of phosphoenolpyruvate (PEP) to form oxaloacetate (OAA), a four-carbon dicarboxylic acid source for the tricarboxylic acid cycle. This chain is Phosphoenolpyruvate carboxylase, found in Methanosarcina barkeri (strain Fusaro / DSM 804).